Reading from the N-terminus, the 411-residue chain is MNKELLNCERVWLNVTPATLRSDLADYGLLEPHALGVHEGRIHALVPMQDLKGPYPAHWQDMKGKLVTPGLIDCHTHLIFAGSRAEEFELRQKGVPYAEIARKGGGIISTVRATRAACEEQLFELALPRVKSLIREGVTTVEIKSGYGLTLEDELKMLRVARRLGEALPIRVKTTLLAAHAVPPEYRDDPDSWVETICQEIIPAAAEAGLADAVDVFCEHIGFSLAQTEQVYLAADQYGLAVKGHMDQLSNLGGSTLAANFGALSVDHLEYLDPEGIQALAHRGVVATLLPTAFYFLKETKLPPVAALRKAGVPMAVSSDINPGTAPIVSLRMAMNMACTLFGLTPVEAMAGVTRHAARALGEQEQLGQLRVGMLADFLVWNCGHPAELSYLIGVDQLVSRVINGEETLHG.

Fe(3+) is bound by residues histidine 75 and histidine 77. The Zn(2+) site is built by histidine 75 and histidine 77. The 4-imidazolone-5-propanoate site is built by arginine 84, tyrosine 147, and histidine 180. Residue tyrosine 147 participates in N-formimidoyl-L-glutamate binding. Histidine 245 is a Fe(3+) binding site. A Zn(2+)-binding site is contributed by histidine 245. Residue glutamine 248 participates in 4-imidazolone-5-propanoate binding. Aspartate 320 contacts Fe(3+). Residue aspartate 320 participates in Zn(2+) binding. Positions 322 and 324 each coordinate N-formimidoyl-L-glutamate. Threonine 325 contributes to the 4-imidazolone-5-propanoate binding site.

It belongs to the metallo-dependent hydrolases superfamily. HutI family. Zn(2+) serves as cofactor. Requires Fe(3+) as cofactor.

It localises to the cytoplasm. It catalyses the reaction 4-imidazolone-5-propanoate + H2O = N-formimidoyl-L-glutamate. It functions in the pathway amino-acid degradation; L-histidine degradation into L-glutamate; N-formimidoyl-L-glutamate from L-histidine: step 3/3. In terms of biological role, catalyzes the hydrolytic cleavage of the carbon-nitrogen bond in imidazolone-5-propanoate to yield N-formimidoyl-L-glutamate. It is the third step in the universal histidine degradation pathway. The protein is Imidazolonepropionase of Aeromonas hydrophila subsp. hydrophila (strain ATCC 7966 / DSM 30187 / BCRC 13018 / CCUG 14551 / JCM 1027 / KCTC 2358 / NCIMB 9240 / NCTC 8049).